A 417-amino-acid polypeptide reads, in one-letter code: NADH-quinone oxidoreductase subunit D (417 aa).

It belongs to the complex I 49 kDa subunit family. NDH-1 is composed of 14 different subunits. Subunits NuoB, C, D, E, F, and G constitute the peripheral sector of the complex.

It is found in the cell inner membrane. It catalyses the reaction a quinone + NADH + 5 H(+)(in) = a quinol + NAD(+) + 4 H(+)(out). Functionally, NDH-1 shuttles electrons from NADH, via FMN and iron-sulfur (Fe-S) centers, to quinones in the respiratory chain. The immediate electron acceptor for the enzyme in this species is believed to be ubiquinone. Couples the redox reaction to proton translocation (for every two electrons transferred, four hydrogen ions are translocated across the cytoplasmic membrane), and thus conserves the redox energy in a proton gradient. The protein is NADH-quinone oxidoreductase subunit D of Burkholderia mallei (strain NCTC 10247).